Here is a 210-residue protein sequence, read N- to C-terminus: MGVRAQQKEKTRRSLVEAAFSQLSAERSFASLSLREVAREAGIAPTSFYRHFRDVDELGLTMVDESGLMLRQLMRQARQRIAKGGSVIRTSVSTFMEFIGNNPNAFRLLLRERSGTSAAFRAAVAREIQHFIAELADYLELENHMPRAFTEAQAEAMVTIVFSAGAEALDIGAEQRRQLEERLVLQLRMIAKGAYYWYRREQEKIAHHSE.

Residues 10–70 enclose the HTH tetR-type domain; it reads KTRRSLVEAA…TMVDESGLML (61 aa). Positions 33–52 form a DNA-binding region, H-T-H motif; the sequence is SLREVAREAGIAPTSFYRHF.

In terms of assembly, homodimer.

It is found in the cytoplasm. In terms of biological role, represses the transcription of fabB, involved in unsaturated fatty acid (UFA) biosynthesis. By controlling UFA production, FabR directly influences the physical properties of the membrane bilayer. This is HTH-type transcriptional repressor FabR from Salmonella choleraesuis (strain SC-B67).